Here is a 201-residue protein sequence, read N- to C-terminus: LexA repressor 1 (201 aa).

Residues 28–48 (LREIAAHLKISGTLGVSKHLE) constitute a DNA-binding region (H-T-H motif). Residues serine 120 and lysine 157 each act as for autocatalytic cleavage activity in the active site.

Belongs to the peptidase S24 family. Homodimer.

It catalyses the reaction Hydrolysis of Ala-|-Gly bond in repressor LexA.. Its function is as follows. Represses a number of genes involved in the response to DNA damage (SOS response), including recA and lexA. In the presence of single-stranded DNA, RecA interacts with LexA causing an autocatalytic cleavage which disrupts the DNA-binding part of LexA, leading to derepression of the SOS regulon and eventually DNA repair. In Geobacter sulfurreducens (strain ATCC 51573 / DSM 12127 / PCA), this protein is LexA repressor 1.